A 159-amino-acid polypeptide reads, in one-letter code: Probable metallophosphoesterase MPN_126 (159 aa).

Residues Asp-9, His-11, Asp-34, Asn-53, His-75, His-107, and His-109 each contribute to the Mn(2+) site.

The protein belongs to the metallophosphoesterase superfamily. YfcE family. It depends on Mn(2+) as a cofactor.

The chain is Probable metallophosphoesterase MPN_126 from Mycoplasma pneumoniae (strain ATCC 29342 / M129 / Subtype 1) (Mycoplasmoides pneumoniae).